Consider the following 877-residue polypeptide: Putative leucine-rich repeat receptor-like serine/threonine-protein kinase At2g19230 (877 aa).

An N-terminal signal peptide occupies residues 1-24 (MGNFNFLPLVSFASFVVVLVLVCA). Over 25-517 (QDQSGFVSID…RNKKTERKEY (493 aa)) the chain is Extracellular. 6 N-linked (GlcNAc...) asparagine glycosylation sites follow: Asn-142, Asn-233, Asn-261, Asn-295, Asn-405, and Asn-420. LRR repeat units lie at residues 439–462 (PLQK…ANLP) and 463–484 (DLTE…KLLE). A helical membrane pass occupies residues 518 to 538 (IIPSVASVTGLFFLLLALISF). Residues 539–877 (WQFKKRQQSV…VDPGVLPQPR (339 aa)) lie on the Cytoplasmic side of the membrane. Residues 569 to 842 (NNFERVLGQG…QVVAELKESL (274 aa)) enclose the Protein kinase domain. ATP is bound by residues 575–583 (LGQGGFGKV) and Lys-596. Phosphotyrosine is present on Tyr-641. Asp-692 serves as the catalytic Proton acceptor. Ser-726 is subject to Phosphoserine. Phosphothreonine occurs at positions 727 and 732.

It belongs to the protein kinase superfamily. Ser/Thr protein kinase family.

The protein localises to the cell membrane. The enzyme catalyses L-seryl-[protein] + ATP = O-phospho-L-seryl-[protein] + ADP + H(+). The catalysed reaction is L-threonyl-[protein] + ATP = O-phospho-L-threonyl-[protein] + ADP + H(+). The chain is Putative leucine-rich repeat receptor-like serine/threonine-protein kinase At2g19230 from Arabidopsis thaliana (Mouse-ear cress).